The primary structure comprises 601 residues: Multidrug and toxin extrusion protein 2 (601 aa).

Over 1–62 (MNTAFAGFDE…PRGFWDEARA (62 aa)) the chain is Cytoplasmic. A helical transmembrane segment spans residues 63-83 (LFVLSGPLFLFQVLNFLTYVV). At 84 to 95 (GTVFCGHLGKVE) the chain is on the extracellular side. A helical transmembrane segment spans residues 96–116 (LASVTLGVAFVNVCGVSVGAG). Over 117–145 (LSSACDTLMSQSFGSPNKKHVGVILQRGS) the chain is Cytoplasmic. Residues 146 to 166 (LILLLCCLPCWALFLNTQHIL) form a helical membrane-spanning segment. Over 167–182 (LLFRQDPAVSRLTQDY) the chain is Extracellular. Residues 183–203 (AMIFIPGLPAIFLYSLLAKYL) form a helical membrane-spanning segment. The Cytoplasmic portion of the chain corresponds to 204-212 (QNQGIVWPQ). The chain crosses the membrane as a helical span at residues 213 to 233 (VLSGVVGNCVNGVANYALVSV). Residues 234–241 (LNLGVRGS) lie on the Extracellular side of the membrane. Residues 242–262 (AYANTISQFVQAAFLFLHIVL) traverse the membrane as a helical segment. Residues 263–281 (KKLHLETWEGWSSQCLRDW) lie on the Cytoplasmic side of the membrane. Residues 282 to 301 (GPFLSLAIPSMLMMCVEWWA) form a helical membrane-spanning segment. At 302–320 (YEIGSFLMGLLGVVDLSGQ) the chain is on the extracellular side. Residues 321 to 341 (AIIYEVATVVYMIPMGLGMAV) traverse the membrane as a helical segment. Residues 342–361 (CVRVGTALGAADTLQAKRSA) lie on the Cytoplasmic side of the membrane. The chain crosses the membrane as a helical span at residues 362-382 (VSGLLCTAGTSLVVGTLLGLL). Residues 383 to 402 (NSQLGYIFTSDEEVIALVNQ) are Extracellular-facing. Residues 403 to 423 (VLPIYIVFQLVEAVCCVFGGV) traverse the membrane as a helical segment. The Cytoplasmic segment spans residues 424–437 (LRGTGKQAFGAIVN). A helical membrane pass occupies residues 438-458 (AIMYYIVGLPLGIVLTFVVGM). R459 is a topological domain (extracellular). A helical membrane pass occupies residues 460–480 (IMGLWLGMLTCIFLAAVTFVV). The Cytoplasmic segment spans residues 481 to 577 (YAVQLDWKLA…LSVRQLLFRR (97 aa)). Residues 578 to 598 (GAALAASVAVLMAGLLVRVLT) form a helical membrane-spanning segment. Topologically, residues 599-601 (TGY) are extracellular.

It belongs to the multi antimicrobial extrusion (MATE) (TC 2.A.66.1) family. As to expression, expressed in renal cortical tissues.

It is found in the cell membrane. The protein localises to the apical cell membrane. The catalysed reaction is thiamine(out) + H(+)(in) = thiamine(in) + H(+)(out). It catalyses the reaction estrone 3-sulfate(in) + H(+)(out) = estrone 3-sulfate(out) + H(+)(in). It carries out the reaction creatinine(in) + H(+)(out) = creatinine(out) + H(+)(in). Multidrug efflux pump that functions as a H(+)/organic cation antiporter. Mediates the efflux of cationic compounds, such as the model cations, tetraethylammonium (TEA) and 1-methyl-4-phenylpyridinium (MPP+), the platinum-based drug oxaliplatin or weak bases that are positively charged at physiological pH, cimetidine or the antidiabetic drug metformin. Mediates the efflux of the endogenous compounds creatinine, thiamine and estrone-3-sulfate. Plays a physiological role in the excretion of drugs, toxins and endogenous metabolites through the kidney. In Oryctolagus cuniculus (Rabbit), this protein is Multidrug and toxin extrusion protein 2 (SLC47A2).